The following is a 282-amino-acid chain: Shikimate dehydrogenase (NADP(+)) (282 aa).

Shikimate-binding positions include 15–17 and Thr62; that span reads SKS. Catalysis depends on Lys66, which acts as the Proton acceptor. Positions 87 and 103 each coordinate shikimate. NADP(+) is bound by residues 127–131, 151–156, and Met220; these read GAGGA and NRTHTK. Tyr222 serves as a coordination point for shikimate. NADP(+) is bound at residue Gly244.

The protein belongs to the shikimate dehydrogenase family. In terms of assembly, homodimer.

It carries out the reaction shikimate + NADP(+) = 3-dehydroshikimate + NADPH + H(+). It functions in the pathway metabolic intermediate biosynthesis; chorismate biosynthesis; chorismate from D-erythrose 4-phosphate and phosphoenolpyruvate: step 4/7. Its function is as follows. Involved in the biosynthesis of the chorismate, which leads to the biosynthesis of aromatic amino acids. Catalyzes the reversible NADPH linked reduction of 3-dehydroshikimate (DHSA) to yield shikimate (SA). This Shewanella baltica (strain OS155 / ATCC BAA-1091) protein is Shikimate dehydrogenase (NADP(+)).